The following is a 685-amino-acid chain: Phenoloxidase subunit 1 (685 aa).

Positions 1–51 (MSDAKNNLLLFFDRPSEPCFMQKGEENAVFEIPDNYYPEKYQRVSNAIGNR) are excised as a propeptide. N-linked (GlcNAc...) asparagine glycosylation is present at N184. Cu cation is bound by residues H209, H213, and H239. 2 N-linked (GlcNAc...) asparagine glycosylation sites follow: N254 and N324. E351 (proton acceptor) is an active-site residue. Residues H366, H370, and H406 each contribute to the Cu cation site. N-linked (GlcNAc...) asparagine glycans are attached at residues N491 and N540. Intrachain disulfides connect C581–C623 and C583–C630.

Heterodimer. Cu(2+) serves as cofactor. The N-terminus is blocked. Synthesized by hemocytes and released into the hemolymph plasma.

The protein resides in the secreted. The catalysed reaction is 2 L-dopa + O2 = 2 L-dopaquinone + 2 H2O. It catalyses the reaction L-tyrosine + O2 = L-dopaquinone + H2O. Functionally, this is a copper-containing oxidase that functions in the formation of pigments such as melanins and other polyphenolic compounds. Catalyzes the rate-limiting conversions of tyrosine to DOPA, DOPA to DOPA-quinone and possibly 5,6 dihydroxyindole to indole-5'6 quinone. In Bombyx mori (Silk moth), this protein is Phenoloxidase subunit 1.